The primary structure comprises 133 residues: Small ribosomal subunit protein eS17 (133 aa).

This sequence belongs to the eukaryotic ribosomal protein eS17 family.

This Spodoptera frugiperda (Fall armyworm) protein is Small ribosomal subunit protein eS17 (RpS17).